A 508-amino-acid polypeptide reads, in one-letter code: MVSINIRPDEIGSIIRKQIEEYIQEVKVVNIGTVLQVGDGIARIYGLDEVMAGELLEFEDGTVGIALNLESDNVGAVLMGDGLTIQEGGSVKATGKIAQIPVSNAYLGRVVNALAQPIDGKGQISASESRLIESPAPGIISRRSVYEPMQTGLIAIDSMIPIGRGQRELIIGDRQTGKTAVATDTILNQKGQNVTCVYVAIGQKASSVAQVVNTFQERGAMEYTIVVAEMADSPATLQYLAPYTGAALAEYFMYRKQHTLIIYDDLSKQAQAYRQMSLLLRRPPGREAYPGDVFYLHSRLLERAAKLSSQLGEGSMTALPIVETQAGDVSAYIPTNVISITDGQIFLSADLFNAGIRPAINVGISVSRVGSAAQIKAMKQVAGKLKLELAQFAELEAFAQFASDLDRATQNQLARGQRLRELLKQSQSAPLSVEEQVATIYTGVNGYLDILKVEQVKRFLVQLREYLVTNKPQFGEIIRSTKIFTEDAESILRVAIREYTELFLLQEK.

172 to 179 (GDRQTGKT) lines the ATP pocket.

This sequence belongs to the ATPase alpha/beta chains family. In terms of assembly, F-type ATPases have 2 components, CF(1) - the catalytic core - and CF(0) - the membrane proton channel. CF(1) has five subunits: alpha(3), beta(3), gamma(1), delta(1), epsilon(1). CF(0) has four main subunits: a, b, b' and c.

The protein localises to the plastid. Its subcellular location is the chloroplast thylakoid membrane. The enzyme catalyses ATP + H2O + 4 H(+)(in) = ADP + phosphate + 5 H(+)(out). Produces ATP from ADP in the presence of a proton gradient across the membrane. The alpha chain is a regulatory subunit. The protein is ATP synthase subunit alpha, chloroplastic of Psilotum nudum (Whisk fern).